We begin with the raw amino-acid sequence, 238 residues long: tRNA (guanine-N(7)-)-methyltransferase (238 aa).

S-adenosyl-L-methionine is bound by residues E68, E93, D120, and D143. D143 is a catalytic residue. Substrate contacts are provided by residues K147, D179, and T216–E219.

The protein belongs to the class I-like SAM-binding methyltransferase superfamily. TrmB family.

It carries out the reaction guanosine(46) in tRNA + S-adenosyl-L-methionine = N(7)-methylguanosine(46) in tRNA + S-adenosyl-L-homocysteine. It functions in the pathway tRNA modification; N(7)-methylguanine-tRNA biosynthesis. Functionally, catalyzes the formation of N(7)-methylguanine at position 46 (m7G46) in tRNA. This chain is tRNA (guanine-N(7)-)-methyltransferase, found in Marinobacter nauticus (strain ATCC 700491 / DSM 11845 / VT8) (Marinobacter aquaeolei).